Consider the following 452-residue polypeptide: MQRRIMGIETEFGVTCTFHGHRRLSPDEVARYLFRRVVSWGRSSNVFLRNGARLYLDVGSHPEYATAECDNLIQLVNHDRAGERVLEELLIDAEQRLAEEGIGGDIYLFKNNTDSAGNSYGCHENFLVARAGEFSRISDVLLPFLVTRQLICGAGKVLQTPKAATFCLSQRAEHIWEGVSSATTRSRPIINTRDEPHADAEKYRRLHVIVGDSNMSESTTMLKVGTAALVLEMIEAGVSFRDFALDNPIRAIREVSHDVTGRRPVRLAGGRQASALDIQREYHARAVEHLQNREPDPQVTQVVELWGRMLDAVETQDFAKVDTEIDWVIKRKLFQRYQDRHGFELADPKIAQLDLAYHDIKRGRGVFDVLQRKGLVKRITEDETIEAAVDTPPQTTRAKLRGEFITAAQEAGRDFTVDWVHLKLNDQAQRTVLCKDPFRSVDERVERLIASM.

Glutamate 9 serves as a coordination point for Mg(2+). Arginine 53 is a binding site for ATP. Residue tyrosine 55 participates in Mg(2+) binding. The active-site Proton acceptor is aspartate 57. Position 63 (glutamate 63) interacts with Mg(2+). The ATP site is built by threonine 66 and tryptophan 419.

This sequence belongs to the Pup ligase/Pup deamidase family. Pup-conjugating enzyme subfamily.

It carries out the reaction ATP + [prokaryotic ubiquitin-like protein]-L-glutamate + [protein]-L-lysine = ADP + phosphate + N(6)-([prokaryotic ubiquitin-like protein]-gamma-L-glutamyl)-[protein]-L-lysine.. Its pathway is protein degradation; proteasomal Pup-dependent pathway. The protein operates within protein modification; protein pupylation. In terms of biological role, catalyzes the covalent attachment of the prokaryotic ubiquitin-like protein modifier Pup to the proteasomal substrate proteins, thereby targeting them for proteasomal degradation. This tagging system is termed pupylation. The ligation reaction involves the side-chain carboxylate of the C-terminal glutamate of Pup and the side-chain amino group of a substrate lysine. The polypeptide is Pup--protein ligase 1 (Rhodococcus erythropolis (Arthrobacter picolinophilus)).